The following is a 499-amino-acid chain: L-arabinose isomerase (499 aa).

Residues glutamate 306, glutamate 333, histidine 350, and histidine 449 each contribute to the Mn(2+) site.

The protein belongs to the arabinose isomerase family. Requires Mn(2+) as cofactor.

The catalysed reaction is beta-L-arabinopyranose = L-ribulose. It functions in the pathway carbohydrate degradation; L-arabinose degradation via L-ribulose; D-xylulose 5-phosphate from L-arabinose (bacterial route): step 1/3. Its function is as follows. Catalyzes the conversion of L-arabinose to L-ribulose. The protein is L-arabinose isomerase of Aeromonas hydrophila subsp. hydrophila (strain ATCC 7966 / DSM 30187 / BCRC 13018 / CCUG 14551 / JCM 1027 / KCTC 2358 / NCIMB 9240 / NCTC 8049).